The primary structure comprises 827 residues: Villin-1 (827 aa).

The interval 1–126 is necessary for homodimerization; the sequence is MTKLNAQVKG…IRKGGVASGM (126 aa). The interval 1–734 is core; the sequence is MTKLNAQVKG…YDDLKAELGN (734 aa). One copy of the Gelsolin-like 1 repeat lies at 27–76; that stretch reads MQMVPVPSSTFGSFFDGDCYVVLAIHKTSSTLSYDIHYWIGQDSSQDEQG. LPA/PIP2-binding site regions lie at residues 112 to 119 and 138 to 146; these read KQGLVIRK and RLLHVKGKR. Gelsolin-like repeat units lie at residues 148 to 188 and 265 to 309; these read VLAG…MERL and LVVR…QERS. Ser-366 is subject to Phosphoserine. 3 Gelsolin-like repeats span residues 407-457, 528-568, and 631-672; these read DLEL…DEIA, TKAF…DERE, and FLAT…EEKK. Residues Ser-735 and Ser-776 each carry the phosphoserine modification. Positions 735-827 are headpiece; sequence SGDWSQIADE…QNIKKEKGLF (93 aa). Residues 761–827 enclose the HP domain; it reads SGPLPTFPLE…QNIKKEKGLF (67 aa). An LPA/PIP2-binding site 3 region spans residues 816–824; the sequence is KQQNIKKEK.

Belongs to the villin/gelsolin family. As to quaternary structure, monomer. Homodimer; homodimerization is necessary for actin-bundling. Associates with F-actin; phosphorylation at tyrosine residues decreases the association with F-actin. Interacts (phosphorylated at C-terminus tyrosine phosphorylation sites) with PLCG1 (via the SH2 domains). Interacts (phosphorylated form) with PLCG1; the interaction is enhanced by hepatocyte growth factor (HGF). Post-translationally, phosphorylated on tyrosine residues by SRC. The unphosphorylated form increases the initial rate of actin-nucleating activity, whereas the tyrosine phosphorylated form inhibits actin-nucleating activity, enhances actin-bundling activity and enhances actin-severing activity by reducing high Ca(2+) requirements. The tyrosine phosphorylated form does not regulate actin-capping activity. Tyrosine phosphorylation is essential for cell migration: tyrosine phosphorylation sites in the N-terminus half regulate actin reorganization and cell morphology, whereas tyrosine phosphorylation sites in the C-terminus half regulate cell migration via interaction with PLCG1. Tyrosine phosphorylation is induced by epidermal growth factor (EGF) and stimulates cell migration. In terms of tissue distribution, expressed in small intestin, colon, kidney and enterocytes (at protein level).

It localises to the cytoplasm. The protein resides in the cytoskeleton. Its subcellular location is the cell projection. It is found in the microvillus. The protein localises to the lamellipodium. It localises to the ruffle. The protein resides in the filopodium tip. Its subcellular location is the filopodium. Functionally, epithelial cell-specific Ca(2+)-regulated actin-modifying protein that modulates the reorganization of microvillar actin filaments. Plays a role in the actin nucleation, actin filament bundle assembly, actin filament capping and severing. Binds phosphatidylinositol 4,5-bisphosphate (PIP2) and lysophosphatidic acid (LPA); binds LPA with higher affinity than PIP2. Binding to LPA increases its phosphorylation by SRC and inhibits all actin-modifying activities. Binding to PIP2 inhibits actin-capping and -severing activities but enhances actin-bundling activity. Regulates the intestinal epithelial cell morphology, cell invasion, cell migration and apoptosis. Protects against apoptosis induced by dextran sodium sulfate (DSS) in the gastrointestinal epithelium. Appears to regulate cell death by maintaining mitochondrial integrity. Enhances hepatocyte growth factor (HGF)-induced epithelial cell motility, chemotaxis and wound repair. Upon S.flexneri cell infection, its actin-severing activity enhances actin-based motility of the bacteria and plays a role during the dissemination. In Mus musculus (Mouse), this protein is Villin-1 (Vil1).